Here is a 424-residue protein sequence, read N- to C-terminus: Imidazolonepropionase (424 aa).

Fe(3+) contacts are provided by histidine 84 and histidine 86. Positions 84 and 86 each coordinate Zn(2+). 4-imidazolone-5-propanoate is bound by residues arginine 93, tyrosine 156, and histidine 189. Tyrosine 156 lines the N-formimidoyl-L-glutamate pocket. Histidine 254 provides a ligand contact to Fe(3+). Histidine 254 contributes to the Zn(2+) binding site. Glutamate 257 contacts 4-imidazolone-5-propanoate. A Fe(3+)-binding site is contributed by aspartate 328. Aspartate 328 serves as a coordination point for Zn(2+). Residues asparagine 330 and glycine 332 each contribute to the N-formimidoyl-L-glutamate site. Position 333 (serine 333) interacts with 4-imidazolone-5-propanoate.

This sequence belongs to the metallo-dependent hydrolases superfamily. HutI family. It depends on Zn(2+) as a cofactor. Fe(3+) serves as cofactor.

It is found in the cytoplasm. The catalysed reaction is 4-imidazolone-5-propanoate + H2O = N-formimidoyl-L-glutamate. It functions in the pathway amino-acid degradation; L-histidine degradation into L-glutamate; N-formimidoyl-L-glutamate from L-histidine: step 3/3. Catalyzes the hydrolytic cleavage of the carbon-nitrogen bond in imidazolone-5-propanoate to yield N-formimidoyl-L-glutamate. It is the third step in the universal histidine degradation pathway. The polypeptide is Imidazolonepropionase (Geobacillus kaustophilus (strain HTA426)).